We begin with the raw amino-acid sequence, 521 residues long: Type-2 serine--tRNA ligase (521 aa).

A316 provides a ligand contact to L-serine. C318 serves as a coordination point for Zn(2+). Position 347 (R347) interacts with L-serine. Residues 347–349 and 358–359 contribute to the ATP site; these read RWE and RV. Residue 364–366 coordinates L-serine; sequence RVE. Residues E366 and C473 each contribute to the Zn(2+) site. R480 contributes to the ATP binding site.

The protein belongs to the class-II aminoacyl-tRNA synthetase family. Type-2 seryl-tRNA synthetase subfamily. Homodimer. The cofactor is Zn(2+).

The protein localises to the cytoplasm. It carries out the reaction tRNA(Ser) + L-serine + ATP = L-seryl-tRNA(Ser) + AMP + diphosphate + H(+). It catalyses the reaction tRNA(Sec) + L-serine + ATP = L-seryl-tRNA(Sec) + AMP + diphosphate + H(+). The protein operates within aminoacyl-tRNA biosynthesis; selenocysteinyl-tRNA(Sec) biosynthesis; L-seryl-tRNA(Sec) from L-serine and tRNA(Sec): step 1/1. Its function is as follows. Catalyzes the attachment of serine to tRNA(Ser). Is also able to aminoacylate tRNA(Sec) with serine, to form the misacylated tRNA L-seryl-tRNA(Sec), which will be further converted into selenocysteinyl-tRNA(Sec). The polypeptide is Type-2 serine--tRNA ligase (serS) (Methanocaldococcus jannaschii (strain ATCC 43067 / DSM 2661 / JAL-1 / JCM 10045 / NBRC 100440) (Methanococcus jannaschii)).